The sequence spans 242 residues: Dehydration-responsive element-binding protein 1J (242 aa).

Over residues 20-29 (SSATTAATAT) the composition is skewed to low complexity. Positions 20–44 (SSATTAATATGPASPKRPAGRTKFQ) are disordered. The segment at residues 50-109 (VFRGVRRRGRAGRWVCEVRVPGSRGDRLWVGTFDTAEEAARAHDAAMLAMCGASASLNFT) is a DNA-binding region (AP2/ERF). The segment at 143–184 (FQRRGSTAATATATSGDAASTAPPSSSPVLSPNDDNASSAST) is disordered. Over residues 148-184 (STAATATATSGDAASTAPPSSSPVLSPNDDNASSAST) the composition is skewed to low complexity.

The protein belongs to the AP2/ERF transcription factor family. ERF subfamily.

It is found in the nucleus. Functionally, transcriptional activator that binds specifically to the DNA sequence 5'-[AG]CCGAC-3'. Binding to the C-repeat/DRE element mediates high salinity- and dehydration-inducible transcription. The sequence is that of Dehydration-responsive element-binding protein 1J (DREB1J) from Oryza sativa subsp. indica (Rice).